Here is a 348-residue protein sequence, read N- to C-terminus: Putative [LysW]-L-2-aminoadipate/[LysW]-L-glutamate phosphate reductase (348 aa).

Position 9 to 12 (9 to 12) interacts with NADP(+); that stretch reads SGYV. Cys-149 is a catalytic residue. Asn-315 lines the NADP(+) pocket.

The protein belongs to the NAGSA dehydrogenase family. Type 1 subfamily. LysY sub-subfamily.

It is found in the cytoplasm. The catalysed reaction is [amino-group carrier protein]-C-terminal-N-(1-carboxy-5-oxopentan-1-yl)-L-glutamine + phosphate + NADP(+) = [amino-group carrier protein]-C-terminal-N-(1-carboxy-5-phosphooxy-5-oxopentan-1-yl)-L-glutamine + NADPH + H(+). It carries out the reaction [amino-group carrier protein]-C-terminal-gamma-(L-glutamyl-5-semialdehyde)-L-glutamate + phosphate + NADP(+) = [amino-group carrier protein]-C-terminal-gamma-(5-phospho-L-glutamyl)-L-glutamate + NADPH + H(+). Its pathway is amino-acid biosynthesis; L-lysine biosynthesis via AAA pathway; L-lysine from L-alpha-aminoadipate (Thermus route): step 3/5. It functions in the pathway amino-acid biosynthesis; L-arginine biosynthesis. In terms of biological role, involved in both the arginine and lysine biosynthetic pathways. This Cenarchaeum symbiosum (strain A) protein is Putative [LysW]-L-2-aminoadipate/[LysW]-L-glutamate phosphate reductase.